The chain runs to 987 residues: Ephrin type-B receptor 4a (987 aa).

An N-terminal signal peptide occupies residues 1-24; sequence MELFSRNVAAFWIILLEFLLGSVA. Over 25–548 the chain is Extracellular; it reads EEEVLMNTKT…DSSSPLLVTG (524 aa). Residues 26–205 form the Eph LBD domain; the sequence is EEVLMNTKTE…FFKKCPALTR (180 aa). 2 cysteine pairs are disulfide-bonded: C70–C187 and C104–C114. The tract at residues 319-340 is disordered; sequence DSADTPCTRPPSSPRSPVPQVN. Residues 326-335 show a composition bias toward pro residues; it reads TRPPSSPRSP. 2 Fibronectin type-III domains span residues 328–438 and 442–536; these read PPSS…TSPN and LVSG…TLPD. A helical membrane pass occupies residues 549 to 569; sequence ILIAMGMLLLIIVIGAAIYCI. The Cytoplasmic portion of the chain corresponds to 570–987; sequence RKQNNYKDPE…QNKAPGNVLY (418 aa). One can recognise a Protein kinase domain in the interval 621 to 884; that stretch reads VKIEEVIGAG…NIVSALDKLI (264 aa). ATP-binding positions include 627-635 and K653; that span reads IGAGEFGEV. The active-site Proton acceptor is the D746. The SAM domain maps to 914-978; it reads SSCGTVGDWL…LSSIEALGIQ (65 aa).

Belongs to the protein kinase superfamily. Tyr protein kinase family. Ephrin receptor subfamily.

Its subcellular location is the cell membrane. The catalysed reaction is L-tyrosyl-[protein] + ATP = O-phospho-L-tyrosyl-[protein] + ADP + H(+). Receptor tyrosine kinase which binds promiscuously transmembrane ephrin-B family ligands residing on adjacent cells, leading to contact-dependent bidirectional signaling into neighboring cells. The signaling pathway downstream of the receptor is referred to as forward signaling while the signaling pathway downstream of the ephrin ligand is referred to as reverse signaling. Together with its cognate ligand/functional ligand EFNB2 is involved in the regulation of cell adhesion and cell migration, and plays a central role in heart morphogenesis, angiogenesis and blood vessel remodeling and permeability. EPHB4-mediated forward signaling controls cellular repulsion and segregation from EFNB2-expressing cells. Involved in somitogenesis. The sequence is that of Ephrin type-B receptor 4a from Danio rerio (Zebrafish).